We begin with the raw amino-acid sequence, 461 residues long: uncharacterized protein (461 aa).

2 helical membrane-spanning segments follow: residues 18-38 (IITW…FLIY) and 124-144 (FIFL…ILSI). PLD phosphodiesterase domains are found at residues 197-224 (YNYR…ADEY) and 374-401 (TPGF…DYRS).

This sequence belongs to the phospholipase D family. Cardiolipin synthase subfamily.

The protein resides in the cell membrane. This is an uncharacterized protein from Streptococcus mutans serotype c (strain ATCC 700610 / UA159).